Reading from the N-terminus, the 57-residue chain is Ribosome modulation factor (57 aa).

The interval Met-1–Glu-28 is disordered.

The protein belongs to the ribosome modulation factor family.

The protein localises to the cytoplasm. Its function is as follows. During stationary phase, converts 70S ribosomes to an inactive dimeric form (100S ribosomes). The chain is Ribosome modulation factor from Vibrio cholerae serotype O1 (strain MJ-1236).